We begin with the raw amino-acid sequence, 343 residues long: Ribosomal RNA small subunit methyltransferase C (343 aa).

This sequence belongs to the methyltransferase superfamily. RsmC family. Monomer.

The protein localises to the cytoplasm. The enzyme catalyses guanosine(1207) in 16S rRNA + S-adenosyl-L-methionine = N(2)-methylguanosine(1207) in 16S rRNA + S-adenosyl-L-homocysteine + H(+). In terms of biological role, specifically methylates the guanine in position 1207 of 16S rRNA in the 30S particle. The polypeptide is Ribosomal RNA small subunit methyltransferase C (Escherichia coli O7:K1 (strain IAI39 / ExPEC)).